Reading from the N-terminus, the 159-residue chain is MSQVLTTYETPVLPEWVDYNGHLRDAFYLLVFSYATDALMAHIGLDSQNRDASGHSLFTLECHLNFLHEVKEGARVEVRTQLLGHDRKRLHIHHALYLPGSGQALALSEQMLLHVSLDGPRSAPFEGEVLARVEALAEAHRALPVPEGVGRVIGLPPVR.

Belongs to the betainyl-CoA thioesterase family.

The catalysed reaction is N,N,N-trimethylglycyl-CoA + H2O = glycine betaine + CoA + H(+). It participates in amine and polyamine metabolism; carnitine metabolism. Its function is as follows. Catalyzes the cleavage of betainyl-CoA (N,N,N-trimethylglycyl-CoA) into glycine betaine and coenzyme A. Is involved in a L-carnitine degradation pathway that allows P.aeruginosa to grow on L-carnitine as the sole source of carbon and nitrogen. This Pseudomonas aeruginosa (strain ATCC 15692 / DSM 22644 / CIP 104116 / JCM 14847 / LMG 12228 / 1C / PRS 101 / PAO1) protein is Betainyl-CoA thioesterase.